A 255-amino-acid chain; its full sequence is Thiazole synthase (255 aa).

K97 acts as the Schiff-base intermediate with DXP in catalysis. 1-deoxy-D-xylulose 5-phosphate-binding positions include G158, 184–185 (AG), and 206–207 (NT).

It belongs to the ThiG family. As to quaternary structure, homotetramer. Forms heterodimers with either ThiH or ThiS.

The protein localises to the cytoplasm. The enzyme catalyses [ThiS sulfur-carrier protein]-C-terminal-Gly-aminoethanethioate + 2-iminoacetate + 1-deoxy-D-xylulose 5-phosphate = [ThiS sulfur-carrier protein]-C-terminal Gly-Gly + 2-[(2R,5Z)-2-carboxy-4-methylthiazol-5(2H)-ylidene]ethyl phosphate + 2 H2O + H(+). It functions in the pathway cofactor biosynthesis; thiamine diphosphate biosynthesis. Functionally, catalyzes the rearrangement of 1-deoxy-D-xylulose 5-phosphate (DXP) to produce the thiazole phosphate moiety of thiamine. Sulfur is provided by the thiocarboxylate moiety of the carrier protein ThiS. In vitro, sulfur can be provided by H(2)S. The sequence is that of Thiazole synthase from Acetivibrio thermocellus (strain ATCC 27405 / DSM 1237 / JCM 9322 / NBRC 103400 / NCIMB 10682 / NRRL B-4536 / VPI 7372) (Clostridium thermocellum).